The following is a 148-amino-acid chain: Auxin-responsive protein SAUR65 (148 aa).

This sequence belongs to the ARG7 family.

It localises to the cell membrane. Functionally, may promote auxin-stimulated organ elongation, such as hypocotyls, stamen filaments and petals. This chain is Auxin-responsive protein SAUR65, found in Arabidopsis thaliana (Mouse-ear cress).